Consider the following 493-residue polypeptide: Probable plastidic glucose transporter 2 (493 aa).

Positions 1 to 14 are enriched in polar residues; sequence MLGLQRETSSMYKR. Residues 1 to 24 form a disordered region; it reads MLGLQRETSSMYKRTSSRDYSPMI. Helical transmembrane passes span 52–72, 94–114, 128–148, 151–171, 182–202, 211–231, 293–313, 329–349, 356–376, 392–412, 424–444, and 450–470; these read LPHV…LGVV, LVVS…GGVA, LPMI…VMLL, FLVG…VTEV, SFIQ…GIPV, VCFW…FLCA, VVFI…NAVF, LGNI…MVLM, LLLL…VGAT, GTLV…GLLL, AMAF…LLFL, and LGPR…VMFV.

Belongs to the major facilitator superfamily. Sugar transporter (TC 2.A.1.1) family.

It localises to the plastid. Its subcellular location is the chloroplast membrane. May be involved in the efflux of glucose towards the cytosol. This Arabidopsis thaliana (Mouse-ear cress) protein is Probable plastidic glucose transporter 2.